A 65-amino-acid polypeptide reads, in one-letter code: Large ribosomal subunit protein bL28 (65 aa).

The protein belongs to the bacterial ribosomal protein bL28 family.

The protein is Large ribosomal subunit protein bL28 of Bifidobacterium animalis subsp. lactis (strain AD011).